The chain runs to 436 residues: Putative F-box/FBD/LRR-repeat protein At5g44960 (436 aa).

Residues 4-50 (CDYINELPDSLLTQILLDLRTKDSVKTSVSSKRWRNLWLNVPGLDLF) enclose the F-box domain. 2 LRR repeats span residues 287–310 (ISSVRHMIISGSILEELHSYSKLG) and 397–420 (SAVLKKLTLRFSFFSSIESESYKK). Residues 355–407 (EENIDFHEVPQCLISTLEYVHINKLMMMEQSGIKLVNYFIENSAVLKKLTLRF) enclose the FBD domain.

The chain is Putative F-box/FBD/LRR-repeat protein At5g44960 from Arabidopsis thaliana (Mouse-ear cress).